The sequence spans 147 residues: Large ribosomal subunit protein bL9 (147 aa).

Belongs to the bacterial ribosomal protein bL9 family.

Binds to the 23S rRNA. This Campylobacter hominis (strain ATCC BAA-381 / DSM 21671 / CCUG 45161 / LMG 19568 / NCTC 13146 / CH001A) protein is Large ribosomal subunit protein bL9.